A 459-amino-acid polypeptide reads, in one-letter code: MVAARARRRKRASVTQLYSTCKAAGTCPPDVIPKVKGTTLADKILQWSGLGIFLGGLGIGTGSGTGGRTGYIPLGGGGRPGVVDIAPARPPIIIEPVAPTEPSIVNLVEDSSIINSGSTIPTFTGTDGFEITSSSTTTPAVLDITPSAGTVHVTSTNIENPLYIEPPFIEAPQSGEVSGHIFTSTPTSGTHGYEEIPMEVFASNVTTGKEPISSTPTPGVRRIAAPRLYSRAFSQVKVTNPDFISKPSTFVTFDNPAFEPADTSLSFEEPTDVAPDPDFLDIIKLHRPALTSRRGTVRFSRLGQKATIRTRSGKQIGARGHYYHDISSIAPAEELEMQPLLSPSTNNYSYDIYADLNEAETGFMQPTQTTPMLRSPFSPLSTQLPSLSSSVSSSYANVTIPFSTTYNVPIHTGPDVVLPTSPTVWPFIPHTSIDTQHAIVIQGGDYYFVAVYIFVTQTP.

The short motif at 1–12 (MVAARARRRKRA) is the Nuclear localization signal element. C21 and C27 form a disulfide bridge. The short motif at 454 to 458 (FVTQT) is the Nuclear localization signal element.

This sequence belongs to the papillomaviridae L2 protein family. As to quaternary structure, interacts with major capsid protein L1. Interacts with E2; this interaction inhibits E2 transcriptional activity but not the DNA replication function E2. Interacts with host GADD45GIP1. Interacts with host HSPA8; this interaction is required for L2 nuclear translocation. Interacts with host importins KPNB2 and KPNB3. Forms a complex with importin alpha2-beta1 heterodimers via interaction with the importin alpha2 adapter. Interacts with host DYNLT1; this interaction is essential for virus intracellular transport during entry. Interacts (via C-terminus) with host retromer subunits VPS35 and VPS29. Highly phosphorylated.

The protein resides in the virion. It localises to the host nucleus. The protein localises to the host early endosome. It is found in the host Golgi apparatus. In terms of biological role, minor protein of the capsid that localizes along the inner surface of the virion, within the central cavities beneath the L1 pentamers. Plays a role in capsid stabilization through interaction with the major capsid protein L1. Once the virion enters the host cell, L2 escorts the genomic DNA into the nucleus by promoting escape from the endosomal compartments and traffic through the host Golgi network. Mechanistically, the C-terminus of L2 possesses a cell-penetrating peptide that protudes from the host endosome, interacts with host cytoplasmic retromer cargo and thereby mediates the capsid delivery to the host trans-Golgi network. Plays a role through its interaction with host dynein in the intracellular microtubule-dependent transport of viral capsid toward the nucleus. Mediates the viral genome import into the nucleus through binding to host importins. Once within the nucleus, L2 localizes viral genomes to host PML bodies in order to activate early gene expression for establishment of infection. Later on, promotes late gene expression by interacting with the viral E2 protein and by inhibiting its transcriptional activation functions. During virion assembly, encapsidates the genome by direct interaction with the viral DNA. This chain is Minor capsid protein L2, found in Human papillomavirus 82.